The following is a 138-amino-acid chain: Thyrotropin subunit beta (138 aa).

A signal peptide spans 1-20 (MTATFLMSLLFGLAFGQTMS). 6 disulfide bridges follow: cysteine 22–cysteine 72, cysteine 36–cysteine 87, cysteine 39–cysteine 125, cysteine 47–cysteine 103, cysteine 51–cysteine 105, and cysteine 108–cysteine 115. A glycan (N-linked (GlcNAc...) asparagine) is linked at asparagine 43. A propeptide spanning residues 133–138 (LVGFPV) is cleaved from the precursor.

It belongs to the glycoprotein hormones subunit beta family. In terms of assembly, heterodimer of a common alpha chain and a unique beta chain which confers biological specificity to thyrotropin, lutropin, follitropin and gonadotropin.

Its subcellular location is the secreted. Functionally, indispensable for the control of thyroid structure and metabolism. This Monodelphis domestica (Gray short-tailed opossum) protein is Thyrotropin subunit beta (TSHB).